The chain runs to 442 residues: Putative amino acid transporter YuiF (442 aa).

A run of 11 helical transmembrane segments spans residues 21–41, 51–71, 103–123, 146–166, 190–210, 236–256, 259–279, 292–312, 335–355, 364–384, and 421–441; these read IVIALIIGALAGGLTGGLGLG, LGGNATVAVSYAMLGAFAAAL, LIVLIILIVSCFSQNVVPVHI, LIACVITFGLTAPYILLPVGF, IPYALIIPVAGMVVGLILSVI, IGIAVLAIVVSLGVQLYLSQT, VEGMIMGALAGLIVLFVSGVM, MVLMAFIGFVMLVAAGFSNVL, LGALLMLIVGLLITMGIGSSF, IFVPLCMQLGFSPMATIAIIG, and VPTFIFYNIPLVIFGWIAALV.

The protein resides in the cell membrane. The polypeptide is Putative amino acid transporter YuiF (yuiF) (Bacillus subtilis (strain 168)).